A 403-amino-acid polypeptide reads, in one-letter code: Acetate kinase (403 aa).

Asn8 serves as a coordination point for Mg(2+). Position 15 (Lys15) interacts with ATP. Arg90 serves as a coordination point for substrate. Asp147 functions as the Proton donor/acceptor in the catalytic mechanism. Residues 207–211 (HLGSG), 282–284 (DLR), and 330–334 (GVGEN) each bind ATP. Position 384 (Glu384) interacts with Mg(2+).

Belongs to the acetokinase family. Homodimer. Mg(2+) is required as a cofactor. It depends on Mn(2+) as a cofactor.

The protein localises to the cytoplasm. It catalyses the reaction acetate + ATP = acetyl phosphate + ADP. It participates in metabolic intermediate biosynthesis; acetyl-CoA biosynthesis; acetyl-CoA from acetate: step 1/2. Functionally, catalyzes the formation of acetyl phosphate from acetate and ATP. Can also catalyze the reverse reaction. This is Acetate kinase from Exiguobacterium sp. (strain ATCC BAA-1283 / AT1b).